Reading from the N-terminus, the 209-residue chain is Molybdenum cofactor guanylyltransferase (209 aa).

GTP is bound by residues 14–16, K31, and D104; that span reads LAG. D104 contacts Mg(2+).

This sequence belongs to the MobA family. Monomer. The cofactor is Mg(2+).

Its subcellular location is the cytoplasm. The enzyme catalyses Mo-molybdopterin + GTP + H(+) = Mo-molybdopterin guanine dinucleotide + diphosphate. Functionally, transfers a GMP moiety from GTP to Mo-molybdopterin (Mo-MPT) cofactor (Moco or molybdenum cofactor) to form Mo-molybdopterin guanine dinucleotide (Mo-MGD) cofactor. The protein is Molybdenum cofactor guanylyltransferase of Helicobacter pylori (strain J99 / ATCC 700824) (Campylobacter pylori J99).